The primary structure comprises 327 residues: Acetaldehyde dehydrogenase 6 (327 aa).

An NAD(+)-binding site is contributed by 15 to 18; sequence SGNI. Residue C133 is the Acyl-thioester intermediate of the active site. NAD(+) is bound by residues 164 to 172 and N297; that span reads SAGPGTRAN.

The protein belongs to the acetaldehyde dehydrogenase family.

It carries out the reaction acetaldehyde + NAD(+) + CoA = acetyl-CoA + NADH + H(+). The sequence is that of Acetaldehyde dehydrogenase 6 from Rhodococcus opacus (strain B4).